The chain runs to 233 residues: Superoxide dismutase [Mn], mitochondrial (233 aa).

The N-terminal 26 residues, Met-1 to Thr-26, are a transit peptide targeting the mitochondrion. 2 residues coordinate Mn(2+): His-52 and His-107. Phosphothreonine occurs at positions 147 and 149. Residues Asp-194 and His-198 each contribute to the Mn(2+) site.

The protein belongs to the iron/manganese superoxide dismutase family. In terms of assembly, homotetramer. The cofactor is Mn(2+).

Its subcellular location is the mitochondrion matrix. The catalysed reaction is 2 superoxide + 2 H(+) = H2O2 + O2. Its function is as follows. Destroys superoxide anion radicals which are normally produced within the cells and which are toxic to biological systems. This Saccharomyces cerevisiae (strain ATCC 204508 / S288c) (Baker's yeast) protein is Superoxide dismutase [Mn], mitochondrial (SOD2).